The primary structure comprises 181 residues: Oligoribonuclease (181 aa).

Residues 8 to 171 (LIWVDLEMTG…EDIKESIAEM (164 aa)) enclose the Exonuclease domain. The active site involves Tyr-129.

Belongs to the oligoribonuclease family.

The protein localises to the cytoplasm. Its function is as follows. 3'-to-5' exoribonuclease specific for small oligoribonucleotides. The sequence is that of Oligoribonuclease from Shewanella frigidimarina (strain NCIMB 400).